The following is a 231-amino-acid chain: AA9 family lytic polysaccharide monooxygenase C (231 aa).

Positions 1-18 are cleaved as a signal peptide; it reads MKSGLLFTTASLALTASA. Cu(2+) is bound at residue histidine 19. The cysteines at positions 60 and 179 are disulfide-linked. 2 N-linked (GlcNAc...) asparagine glycosylation sites follow: asparagine 69 and asparagine 143. O2 is bound by residues histidine 165 and glutamine 174. Tyrosine 176 is a Cu(2+) binding site.

This sequence belongs to the polysaccharide monooxygenase AA9 family. It depends on Cu(2+) as a cofactor.

The protein localises to the secreted. The enzyme catalyses [(1-&gt;4)-beta-D-glucosyl]n+m + reduced acceptor + O2 = 4-dehydro-beta-D-glucosyl-[(1-&gt;4)-beta-D-glucosyl]n-1 + [(1-&gt;4)-beta-D-glucosyl]m + acceptor + H2O.. In terms of biological role, lytic polysaccharide monooxygenase (LPMO) that depolymerizes crystalline and amorphous polysaccharides via the oxidation of scissile alpha- or beta-(1-4)-glycosidic bonds, yielding C1 oxidation products. Catalysis by LPMOs requires the reduction of the active-site copper from Cu(II) to Cu(I) by a reducing agent and H(2)O(2) or O(2) as a cosubstrate. This chain is AA9 family lytic polysaccharide monooxygenase C, found in Emericella nidulans (strain FGSC A4 / ATCC 38163 / CBS 112.46 / NRRL 194 / M139) (Aspergillus nidulans).